Reading from the N-terminus, the 89-residue chain is Small ribosomal subunit protein uS15 (89 aa).

Positions 1–24 (MSLNAEQKSEIVEQFRRSPSDTGS) are disordered. Residues 7 to 19 (QKSEIVEQFRRSP) are compositionally biased toward basic and acidic residues.

The protein belongs to the universal ribosomal protein uS15 family. In terms of assembly, part of the 30S ribosomal subunit. Forms a bridge to the 50S subunit in the 70S ribosome, contacting the 23S rRNA.

Functionally, one of the primary rRNA binding proteins, it binds directly to 16S rRNA where it helps nucleate assembly of the platform of the 30S subunit by binding and bridging several RNA helices of the 16S rRNA. Forms an intersubunit bridge (bridge B4) with the 23S rRNA of the 50S subunit in the ribosome. The protein is Small ribosomal subunit protein uS15 of Halorhodospira halophila (strain DSM 244 / SL1) (Ectothiorhodospira halophila (strain DSM 244 / SL1)).